Here is a 235-residue protein sequence, read N- to C-terminus: Aspartate/glutamate leucyltransferase (235 aa).

The protein belongs to the R-transferase family. Bpt subfamily.

It localises to the cytoplasm. It carries out the reaction N-terminal L-glutamyl-[protein] + L-leucyl-tRNA(Leu) = N-terminal L-leucyl-L-glutamyl-[protein] + tRNA(Leu) + H(+). It catalyses the reaction N-terminal L-aspartyl-[protein] + L-leucyl-tRNA(Leu) = N-terminal L-leucyl-L-aspartyl-[protein] + tRNA(Leu) + H(+). In terms of biological role, functions in the N-end rule pathway of protein degradation where it conjugates Leu from its aminoacyl-tRNA to the N-termini of proteins containing an N-terminal aspartate or glutamate. In Pseudomonas savastanoi pv. phaseolicola (strain 1448A / Race 6) (Pseudomonas syringae pv. phaseolicola (strain 1448A / Race 6)), this protein is Aspartate/glutamate leucyltransferase.